We begin with the raw amino-acid sequence, 934 residues long: Oxysterol-binding protein-related protein 6 (934 aa).

Positions 1–62 (MSSDEKGISP…RQLLEPEPVP (62 aa)) are disordered. The residue at position 2 (Ser-2) is an N-acetylserine. Positions 14 to 29 (TSTPTHRSASSSTSSQ) are enriched in low complexity. A compositionally biased stretch (basic and acidic residues) spans 30–40 (RDSRQSIHILE). Ser-35 is subject to Phosphoserine. Residues 42–53 (TASSSTEPSVSR) show a composition bias toward polar residues. The PH domain occupies 86-181 (PDKHEGFMLK…WVSKLRHHRL (96 aa)). A phosphoserine mark is found at Ser-190 and Ser-290.

The protein belongs to the OSBP family. In terms of assembly, homodimer. Interacts with OSBPL3. Expressed in brain and striated muscle (at protein level). Widely expressed. Expressed in skeletal muscle.

It is found in the cytoplasm. The protein resides in the cytosol. Its subcellular location is the endoplasmic reticulum membrane. It localises to the nucleus envelope. The protein localises to the cell membrane. It is found in the endosome membrane. Regulates cellular transport and efflux of cholesterol. Plays a role in phosphatidylinositol-4-phophate (PI4P) turnover at the neuronal membrane. Binds via its PH domain PI4P, phosphatidylinositol-4,5-diphosphate, phosphatidylinositol-3,4,5-triphosphate, and phosphatidic acid. Weakly binds 25-hydroxycholesterol. This chain is Oxysterol-binding protein-related protein 6 (OSBPL6), found in Homo sapiens (Human).